Consider the following 188-residue polypeptide: Ribosome-recycling factor (188 aa).

This sequence belongs to the RRF family.

The protein localises to the cytoplasm. Its function is as follows. Responsible for the release of ribosomes from messenger RNA at the termination of protein biosynthesis. May increase the efficiency of translation by recycling ribosomes from one round of translation to another. This chain is Ribosome-recycling factor, found in Anaeromyxobacter dehalogenans (strain 2CP-1 / ATCC BAA-258).